The sequence spans 642 residues: MPLLTRITGPRDLDRLSLEELTQLAEEIRTFLVDAVSKTGGHLGPNLGVVELTLALHRVFESPKDKVLWDTGHQSYVHKLLTGRQDFSKLKMKGGLSGYPSQGESEHDVIENSHASTVLGWADGIAKANQVMERDDHVVAVIGDGALTGGMAWEALNNIAAAKDRPLVIVVNDNERSYAPTIGGLANHLATLRTTDGYERFLARTKEVLERTPVVGRPLYDTLHGAKKGLKDFIAPQGMFEDLGLKYVGPIDGHDLEALESALTRAKRFGGPVIVHCLTEKGRGYQPALQDEADRFHAVGKIHPDTGLPISTSGADWTSVFGDEMLKLGKEREDVVAITAAMLQPVGLDKFAKAFPDRVYDVGIAEQHGAVSAAGLAHGGVHPVFAVYATFLNRAFDQVLMDVALHKCGVTFVLDRAGVTGTDGASHNGMWDMSILQVVPGLRLAAPRDADQVRAQLREAVVVDDAPTVVRFSKGAVGPAVPAVGRVGGMDVLRAPGTGTPDVLLVSVGALAPMCLEVADLLNKQGISTTVVDPRWVKPVDEAMAPLAERHRVVVTVEDNSRVGGVGSAVAQALRDAGVDVPLRDFGIPPRFLDHASRAEVLAEIGLTAPDIARQVTGLVARLDGRYDRAGAEVDQVEAARD.

Thiamine diphosphate contacts are provided by residues H73 and 113–115 (SHA). Position 144 (D144) interacts with Mg(2+). Thiamine diphosphate-binding positions include 145–146 (GA), N174, Y285, and E366. Residue N174 participates in Mg(2+) binding.

It belongs to the transketolase family. DXPS subfamily. As to quaternary structure, homodimer. Requires Mg(2+) as cofactor. It depends on thiamine diphosphate as a cofactor.

It carries out the reaction D-glyceraldehyde 3-phosphate + pyruvate + H(+) = 1-deoxy-D-xylulose 5-phosphate + CO2. The protein operates within metabolic intermediate biosynthesis; 1-deoxy-D-xylulose 5-phosphate biosynthesis; 1-deoxy-D-xylulose 5-phosphate from D-glyceraldehyde 3-phosphate and pyruvate: step 1/1. In terms of biological role, catalyzes the acyloin condensation reaction between C atoms 2 and 3 of pyruvate and glyceraldehyde 3-phosphate to yield 1-deoxy-D-xylulose-5-phosphate (DXP). The sequence is that of 1-deoxy-D-xylulose-5-phosphate synthase 2 from Streptomyces coelicolor (strain ATCC BAA-471 / A3(2) / M145).